The sequence spans 31 residues: Cytochrome b6-f complex subunit 6 (31 aa).

Residues 4–24 form a helical membrane-spanning segment; it reads ITSYFGFLLAALTITSAIFIG.

It belongs to the PetL family. The 4 large subunits of the cytochrome b6-f complex are cytochrome b6, subunit IV (17 kDa polypeptide, PetD), cytochrome f and the Rieske protein, while the 4 small subunits are PetG, PetL, PetM and PetN. The complex functions as a dimer.

It localises to the plastid. Its subcellular location is the chloroplast thylakoid membrane. In terms of biological role, component of the cytochrome b6-f complex, which mediates electron transfer between photosystem II (PSII) and photosystem I (PSI), cyclic electron flow around PSI, and state transitions. PetL is important for photoautotrophic growth as well as for electron transfer efficiency and stability of the cytochrome b6-f complex. This Ficus carica (Common fig) protein is Cytochrome b6-f complex subunit 6.